Here is a 589-residue protein sequence, read N- to C-terminus: Aspartate--tRNA ligase 2 (589 aa).

E174 contributes to the L-aspartate binding site. The tract at residues 198–201 (QITK) is aspartate. R220 provides a ligand contact to L-aspartate. ATP is bound by residues 220–222 (RDE) and Q229. An L-aspartate-binding site is contributed by H443. E477 lines the ATP pocket. R484 contacts L-aspartate. Position 529-532 (529-532 (GLDR)) interacts with ATP.

It belongs to the class-II aminoacyl-tRNA synthetase family. Type 1 subfamily. As to quaternary structure, homodimer.

Its subcellular location is the cytoplasm. The enzyme catalyses tRNA(Asp) + L-aspartate + ATP = L-aspartyl-tRNA(Asp) + AMP + diphosphate. Its function is as follows. Catalyzes the attachment of L-aspartate to tRNA(Asp) in a two-step reaction: L-aspartate is first activated by ATP to form Asp-AMP and then transferred to the acceptor end of tRNA(Asp). The polypeptide is Aspartate--tRNA ligase 2 (Streptococcus mutans serotype c (strain ATCC 700610 / UA159)).